We begin with the raw amino-acid sequence, 31 residues long: Photosystem II reaction center protein M (31 aa).

Residues 5–25 (ILAFIATALLILVPTAFLLII) traverse the membrane as a helical segment.

Belongs to the PsbM family. As to quaternary structure, PSII is composed of 1 copy each of membrane proteins PsbA, PsbB, PsbC, PsbD, PsbE, PsbF, PsbH, PsbI, PsbJ, PsbK, PsbL, PsbM, PsbT, PsbX, PsbY, PsbZ, Psb30/Ycf12, at least 3 peripheral proteins of the oxygen-evolving complex and a large number of cofactors. It forms dimeric complexes.

It is found in the plastid membrane. Functionally, one of the components of the core complex of photosystem II (PSII). PSII is a light-driven water:plastoquinone oxidoreductase that uses light energy to abstract electrons from H(2)O, generating O(2) and a proton gradient subsequently used for ATP formation. It consists of a core antenna complex that captures photons, and an electron transfer chain that converts photonic excitation into a charge separation. This subunit is found at the monomer-monomer interface. In Cuscuta reflexa (Southern Asian dodder), this protein is Photosystem II reaction center protein M.